A 621-amino-acid polypeptide reads, in one-letter code: Cystathionine gamma-synthase (621 aa).

Lys429 carries the post-translational modification N6-(pyridoxal phosphate)lysine.

The protein belongs to the trans-sulfuration enzymes family. MET7 subfamily. Both met-3 and met-7 are required to form a functional cystathionine gamma-synthase. Requires pyridoxal 5'-phosphate as cofactor.

The catalysed reaction is O-succinyl-L-homoserine + L-cysteine = L,L-cystathionine + succinate + H(+). The protein operates within amino-acid biosynthesis; L-methionine biosynthesis via de novo pathway; L-cystathionine from O-succinyl-L-homoserine: step 1/1. Catalyzes the formation of L-cystathionine from O-succinyl-L-homoserine (OSHS) and L-cysteine, via a gamma-replacement reaction. In the absence of thiol, catalyzes gamma-elimination to form 2-oxobutanoate, succinate and ammonia. The protein is Cystathionine gamma-synthase (met-7) of Neurospora crassa (strain ATCC 24698 / 74-OR23-1A / CBS 708.71 / DSM 1257 / FGSC 987).